We begin with the raw amino-acid sequence, 395 residues long: Tubulin-like protein CetZ1 (395 aa).

Residues 10–14 (QAGGK), 110–112 (GTG), E142, N169, and N187 each bind GTP.

Belongs to the CetZ family.

The protein resides in the cytoplasm. Functionally, involved in cell shape control. Essential for the development of a rod-shaped cell type required for efficient swimming. This chain is Tubulin-like protein CetZ1, found in Haloferax volcanii (strain ATCC 29605 / DSM 3757 / JCM 8879 / NBRC 14742 / NCIMB 2012 / VKM B-1768 / DS2) (Halobacterium volcanii).